The following is a 606-amino-acid chain: NADH-ubiquinone oxidoreductase chain 5 (606 aa).

A run of 16 helical transmembrane segments spans residues 1–21 (MNLF…PIIM), 43–63 (AFII…EAII), 88–108 (IFIP…MWYM), 117–137 (FFKY…ANNL), 140–160 (LFIG…WWYG), 171–191 (AILY…WFLT), 209–229 (LNIP…QFGL), 241–261 (TPVS…FLLI), 273–293 (MQTL…ICAL), 310–330 (LGLM…LHIC), 366–386 (MPFT…MPFL), 413–433 (LIAT…VLLG), 457–477 (LLIG…PTTI), 488–508 (LTAL…NLAA), 513–533 (FMYP…PIVM), and 582–602 (GLVK…LILL).

The protein belongs to the complex I subunit 5 family. In terms of assembly, core subunit of respiratory chain NADH dehydrogenase (Complex I) which is composed of 45 different subunits.

The protein localises to the mitochondrion inner membrane. It catalyses the reaction a ubiquinone + NADH + 5 H(+)(in) = a ubiquinol + NAD(+) + 4 H(+)(out). In terms of biological role, core subunit of the mitochondrial membrane respiratory chain NADH dehydrogenase (Complex I) which catalyzes electron transfer from NADH through the respiratory chain, using ubiquinone as an electron acceptor. Essential for the catalytic activity and assembly of complex I. This Felis catus (Cat) protein is NADH-ubiquinone oxidoreductase chain 5 (MT-ND5).